Here is a 136-residue protein sequence, read N- to C-terminus: ATP synthase epsilon chain (136 aa).

The segment at 112-136 is disordered; that stretch reads GNSADKLKAKESLNKARARSQAVGE. Over residues 116–125 the composition is skewed to basic and acidic residues; the sequence is DKLKAKESLN.

It belongs to the ATPase epsilon chain family. In terms of assembly, F-type ATPases have 2 components, CF(1) - the catalytic core - and CF(0) - the membrane proton channel. CF(1) has five subunits: alpha(3), beta(3), gamma(1), delta(1), epsilon(1). CF(0) has three main subunits: a, b and c.

It is found in the cellular thylakoid membrane. Produces ATP from ADP in the presence of a proton gradient across the membrane. In Prochlorococcus marinus (strain SARG / CCMP1375 / SS120), this protein is ATP synthase epsilon chain.